The following is a 163-amino-acid chain: Transcriptional repressor NrdR (163 aa).

The segment at 3–34 (CPFCRHPDSRVVDSRVSDDGSSIRRRRQCPQC) is a zinc-finger region. The 91-residue stretch at 46–136 (LTVIKRSGIG…VYQAFESLDD (91 aa)) folds into the ATP-cone domain.

Belongs to the NrdR family. Zn(2+) serves as cofactor.

In terms of biological role, negatively regulates transcription of bacterial ribonucleotide reductase nrd genes and operons by binding to NrdR-boxes. This chain is Transcriptional repressor NrdR, found in Renibacterium salmoninarum (strain ATCC 33209 / DSM 20767 / JCM 11484 / NBRC 15589 / NCIMB 2235).